The sequence spans 646 residues: MRAPGAGSASVASLVLLWLLGLPWTWSTAAALGVYVGGGGWRFLRIVCKTARRDLFGLSVLIRVRLELRRHQRARHTIPQIFQAVVQRQPERLALVDAGSGACWTFAQLDAYSNAVANLFRRLGFAPGDVVAIFMEGRPEFVGLWLGLAKAGVEAALLNVNLRREPLAFCLGTSGAKALVFGGELAAAVAEMSGELGKSLVKFCSGDVGPDGVFPDTQLLDPLLKETSTAPLAQPPGKGMDDRLFYIYTSGTTGLPKAAIIVHSRYYRIAAFGHYSYSMQAADVLYDCLPLYHSAGNIMGVGQCLIYGLTVVLRKKFSASRFWDDCVKYNCTVVQYIGEICRYLLKQPVREAEGRHRVRLAVGNGLRPSIWEEFTERFGVRQIGEFYGATECNCSIANMDGKVGSRGFNSRILPHVYPIRLVKVNEDTMELLRDAQGLCIPCQTGEPGLLVGQINQQDPLRRFDGYISESATSKKIAHSVFRKGDSAYLSGDVLVMDELGYMYFRDRSGDTFRWRGENVSTTEVEGVLSRLLGQTDVAVYGVAVPGVEGKACMAAIADPHGRLSPNALYEELQKVLAPYARPIFLRLLPQVDTTGTFKIQKTRLQHEGFDPRQTSDRLFFLDLKQGHYLPLDQGVYTRICSGAFAL.

Over 1 to 13 the chain is Extracellular; it reads MRAPGAGSASVAS. The helical transmembrane segment at 14–34 threads the bilayer; sequence LVLLWLLGLPWTWSTAAALGV. Residues 35–646 are Cytoplasmic-facing; the sequence is YVGGGGWRFL…TRICSGAFAL (612 aa). The interval 191 to 475 is sufficient for oligomerization; that stretch reads EMSGELGKSL…YISESATSKK (285 aa). Position 246-257 (246-257) interacts with AMP; it reads YIYTSGTTGLPK.

It belongs to the ATP-dependent AMP-binding enzyme family. In terms of assembly, self-associates. May function as a homodimer. Interacts with EPRS1; mediates the translocation of SLC27A1 from the cytoplasm to the plasma membrane thereby increasing the uptake of long-chain fatty acids. Interacts with DGAT2 and this interaction is enhanced in the presence of ZFYVE1.

Its subcellular location is the cell membrane. It localises to the endomembrane system. It is found in the cytoplasm. It carries out the reaction a fatty acid(in) = a fatty acid(out). The catalysed reaction is (9Z)-octadecenoate(out) = (9Z)-octadecenoate(in). The enzyme catalyses hexadecanoate(out) = hexadecanoate(in). It catalyses the reaction (5Z,8Z,11Z,14Z)-eicosatetraenoate(out) = (5Z,8Z,11Z,14Z)-eicosatetraenoate(in). It carries out the reaction (9Z,12Z)-octadecadienoate(out) = (9Z,12Z)-octadecadienoate(in). The catalysed reaction is a long-chain fatty acid + ATP + CoA = a long-chain fatty acyl-CoA + AMP + diphosphate. The enzyme catalyses (5Z,8Z,11Z,14Z)-eicosatetraenoate + ATP + CoA = (5Z,8Z,11Z,14Z)-eicosatetraenoyl-CoA + AMP + diphosphate. It catalyses the reaction a very long-chain fatty acid + ATP + CoA = a very long-chain fatty acyl-CoA + AMP + diphosphate. It carries out the reaction tetracosanoate + ATP + CoA = tetracosanoyl-CoA + AMP + diphosphate. With respect to regulation, inhibited by Triacsin C. Mediates the import of long-chain fatty acids (LCFA) into the cell by facilitating their transport at the plasma membrane. Also functions as an acyl-CoA ligase catalyzing the ATP-dependent formation of fatty acyl-CoA using LCFA and very-long-chain fatty acids (VLCFA) as substrates, which prevents fatty acid efflux from cells and might drive more fatty acid uptake. May act directly as a bona fide transporter, or alternatively, in a cytoplasmic or membrane-associated multimeric protein complex to trap and draw fatty acids towards accumulation. Plays a pivotal role in regulating available LCFA substrates from exogenous sources in tissues undergoing high levels of beta-oxidation or triglyceride synthesis. May be involved in regulation of cholesterol metabolism. Probably involved in fatty acid transport across the blood barrier. The chain is Long-chain fatty acid transport protein 1 from Bos taurus (Bovine).